The sequence spans 235 residues: Ubiquinone biosynthesis O-methyltransferase (235 aa).

S-adenosyl-L-methionine-binding residues include arginine 36, glycine 56, aspartate 77, and methionine 122.

The protein belongs to the methyltransferase superfamily. UbiG/COQ3 family.

It catalyses the reaction a 3-demethylubiquinol + S-adenosyl-L-methionine = a ubiquinol + S-adenosyl-L-homocysteine + H(+). The catalysed reaction is a 3-(all-trans-polyprenyl)benzene-1,2-diol + S-adenosyl-L-methionine = a 2-methoxy-6-(all-trans-polyprenyl)phenol + S-adenosyl-L-homocysteine + H(+). Its pathway is cofactor biosynthesis; ubiquinone biosynthesis. In terms of biological role, O-methyltransferase that catalyzes the 2 O-methylation steps in the ubiquinone biosynthetic pathway. This chain is Ubiquinone biosynthesis O-methyltransferase, found in Leptothrix cholodnii (strain ATCC 51168 / LMG 8142 / SP-6) (Leptothrix discophora (strain SP-6)).